An 83-amino-acid polypeptide reads, in one-letter code: Small ribosomal subunit protein eS21 (83 aa).

At Met1 the chain carries N-acetylmethionine. Residue Lys41 forms a Glycyl lysine isopeptide (Lys-Gly) (interchain with G-Cter in SUMO2) linkage. Lys81 is modified (N6-acetyllysine).

This sequence belongs to the eukaryotic ribosomal protein eS21 family. In terms of assembly, component of the 40S small ribosomal subunit.

It localises to the cytoplasm. The protein localises to the cytosol. It is found in the rough endoplasmic reticulum. Component of the small ribosomal subunit. The ribosome is a large ribonucleoprotein complex responsible for the synthesis of proteins in the cell. In Sus scrofa (Pig), this protein is Small ribosomal subunit protein eS21 (RPS21).